Consider the following 258-residue polypeptide: 5'-nucleotidase SurE (258 aa).

4 residues coordinate a divalent metal cation: aspartate 9, aspartate 10, serine 42, and asparagine 96.

It belongs to the SurE nucleotidase family. A divalent metal cation is required as a cofactor.

It localises to the cytoplasm. It carries out the reaction a ribonucleoside 5'-phosphate + H2O = a ribonucleoside + phosphate. Nucleotidase that shows phosphatase activity on nucleoside 5'-monophosphates. This chain is 5'-nucleotidase SurE, found in Campylobacter jejuni subsp. jejuni serotype O:2 (strain ATCC 700819 / NCTC 11168).